The primary structure comprises 332 residues: Small ribosomal subunit protein uS2 (332 aa).

It belongs to the universal ribosomal protein uS2 family.

The sequence is that of Small ribosomal subunit protein uS2 from Afipia carboxidovorans (strain ATCC 49405 / DSM 1227 / KCTC 32145 / OM5) (Oligotropha carboxidovorans).